A 446-amino-acid chain; its full sequence is Glucose transporter GlcP (446 aa).

At M1–Y6 the chain is on the cytoplasmic side. The chain crosses the membrane as a helical span at residues L7 to L31. Topologically, residues F32 to P38 are extracellular. Residues L39–P64 traverse the membrane as a helical segment. At L65–G70 the chain is on the cytoplasmic side. The helical transmembrane segment at R71–A90 threads the bilayer. The Extracellular segment spans residues A91–N94. The chain crosses the membrane as a helical span at residues L95 to E122. The Cytoplasmic segment spans residues M123–R129. Residues G130–Y152 form a helical membrane-spanning segment. Residues A153 to F154 are Extracellular-facing. The helical transmembrane segment at A155–F180 threads the bilayer. The Cytoplasmic portion of the chain corresponds to M181–P234. A helical transmembrane segment spans residues W235–A269. At G270 to G272 the chain is on the extracellular side. The chain crosses the membrane as a helical span at residues E273–I295. Residues F296–R303 are Cytoplasmic-facing. Residues K304–L324 form a helical membrane-spanning segment. At I325–G329 the chain is on the extracellular side. Residues I330 to L363 form a helical membrane-spanning segment. Residues F364 to G370 are Cytoplasmic-facing. A helical transmembrane segment spans residues A371–S399. At T400–E401 the chain is on the extracellular side. A helical transmembrane segment spans residues W402–K420. The Cytoplasmic portion of the chain corresponds to F421–E446.

It belongs to the major facilitator superfamily. Sugar transporter (TC 2.A.1.1) family.

It is found in the cell membrane. Inhibited by carbonyl cyanide m-chlorophenylhydrazone (CCCP) and by the human glucose transport inhibitors cytochalasin B, phloretin, and forskolin. Its function is as follows. Transporter highly specific for glucose uptake. The chain is Glucose transporter GlcP from Staphylococcus epidermidis (strain ATCC 12228 / FDA PCI 1200).